The chain runs to 173 residues: Protein PLASTID REDOX INSENSITIVE 2, chloroplastic (173 aa).

Residues 1-55 constitute a chloroplast transit peptide; sequence MATRAWVAAAVALNPQLLPLRSCSPTKSVSPAQRSASMGLRLRSGRPCLGKFVCR.

The protein resides in the plastid. It localises to the chloroplast stroma. It is found in the chloroplast nucleoid. In terms of biological role, required for the activity of the plastid-encoded RNA polymerase (PEP) and full expression of genes transcribed by PEP. The protein is Protein PLASTID REDOX INSENSITIVE 2, chloroplastic of Zea mays (Maize).